We begin with the raw amino-acid sequence, 593 residues long: MRTHYCSAVNELSLDKQITVCGWVHNRRDHGGVIFLDIRDRSGLLQVVYEPENKEIFAIAEKLRSEFVVRVTGIVRKRPEGMINDKMETGRVEVIGTQLEILNQSPTPPFLPDDHQIINEDLRYKYRYIDLRRAVMQKKLTLRHKLNSCIRNYLNEQNFLDIETPMLTKATPEGARDYLVPSRVHPGQFYALPQSPQLFKQLLMMSGFDKYYQIVRCFRDEDLRADRQPEFTQLDIEMAFINEEDILQLIEGLLKIVFKEILNITLPDKLPRMSYKEAMTRYGSDKPDLRNPLELIDIADLVKDCDFNVFASAANDNSGRVVALKLPNGCDLSRKDLDNYGQFVTIYGAKGLAYIKVNDLSAGMAGLQSPILKFLSETAVHSILNRVEAQTGDVIFFGADKAHVVNESMGALRNKLGHDRNLINSGWQLLWVVDWPMFELDPQSNKLQPMHHPFTSPQELSAEALRSKPTQTLAKAYDIVINGYEIGGGSIRIHQPELQKTVFDLIGIDEQEAHEKFGFLLDALQYGAPPHGGIALGIDRLAMLLTDSTSIRDVIAFPKTQTASCPLTSAPSPAGNAQLTELGIRLAPTITTK.

L-aspartate is bound at residue Glu173. An aspartate region spans residues 197–200; that stretch reads QLFK. Arg219 is an L-aspartate binding site. Residues 219-221 and Gln228 each bind ATP; that span reads RDE. His451 provides a ligand contact to L-aspartate. Glu485 contributes to the ATP binding site. Arg492 contacts L-aspartate. An ATP-binding site is contributed by 537-540; the sequence is GIDR.

Belongs to the class-II aminoacyl-tRNA synthetase family. Type 1 subfamily. Homodimer.

The protein localises to the cytoplasm. The enzyme catalyses tRNA(Asx) + L-aspartate + ATP = L-aspartyl-tRNA(Asx) + AMP + diphosphate. In terms of biological role, aspartyl-tRNA synthetase with relaxed tRNA specificity since it is able to aspartylate not only its cognate tRNA(Asp) but also tRNA(Asn). Reaction proceeds in two steps: L-aspartate is first activated by ATP to form Asp-AMP and then transferred to the acceptor end of tRNA(Asp/Asn). The polypeptide is Aspartate--tRNA(Asp/Asn) ligase (Legionella pneumophila subsp. pneumophila (strain Philadelphia 1 / ATCC 33152 / DSM 7513)).